A 512-amino-acid chain; its full sequence is Inosine-5'-monophosphate dehydrogenase (512 aa).

CBS domains follow at residues phenylalanine 110–valine 169 and methionine 173–serine 231. NAD(+) contacts are provided by residues aspartate 268–serine 270 and glycine 318–glycine 320. K(+) is bound by residues glycine 320 and glycine 322. Serine 323 provides a ligand contact to IMP. A K(+)-binding site is contributed by cysteine 325. The active-site Thioimidate intermediate is cysteine 325. Residues aspartate 358–glycine 360, glycine 381–serine 382, and tyrosine 405–glycine 409 contribute to the IMP site. The Proton acceptor role is filled by arginine 423. Glutamine 435 is a binding site for IMP. Positions 494 and 495 each coordinate K(+). The short motif at serine 510 to leucine 512 is the Microbody targeting signal element.

It belongs to the IMPDH/GMPR family. As to quaternary structure, homotetramer. The cofactor is K(+).

The protein resides in the glycosome. It carries out the reaction IMP + NAD(+) + H2O = XMP + NADH + H(+). It participates in purine metabolism; XMP biosynthesis via de novo pathway; XMP from IMP: step 1/1. Its activity is regulated as follows. Mycophenolic acid (MPA) is a non-competitive inhibitor that prevents formation of the closed enzyme conformation by binding to the same site as the amobile flap. In contrast, mizoribine monophosphate (MZP) is a competitive inhibitor that induces the closed conformation. MPA is a potent inhibitor of mammalian IMPDHs but a poor inhibitor of the bacterial enzymes. MZP is a more potent inhibitor of bacterial IMPDH. Catalyzes the conversion of inosine 5'-phosphate (IMP) to xanthosine 5'-phosphate (XMP), the first committed and rate-limiting step in the de novo synthesis of guanine nucleotides, and therefore plays an important role in the regulation of cell growth. This chain is Inosine-5'-monophosphate dehydrogenase, found in Trypanosoma brucei brucei.